Consider the following 315-residue polypeptide: Methionyl-tRNA formyltransferase (315 aa).

Ser107–Pro110 is a binding site for (6S)-5,6,7,8-tetrahydrofolate.

This sequence belongs to the Fmt family.

It carries out the reaction L-methionyl-tRNA(fMet) + (6R)-10-formyltetrahydrofolate = N-formyl-L-methionyl-tRNA(fMet) + (6S)-5,6,7,8-tetrahydrofolate + H(+). Attaches a formyl group to the free amino group of methionyl-tRNA(fMet). The formyl group appears to play a dual role in the initiator identity of N-formylmethionyl-tRNA by promoting its recognition by IF2 and preventing the misappropriation of this tRNA by the elongation apparatus. This is Methionyl-tRNA formyltransferase from Borrelia garinii subsp. bavariensis (strain ATCC BAA-2496 / DSM 23469 / PBi) (Borreliella bavariensis).